A 319-amino-acid polypeptide reads, in one-letter code: 2-oxoglutarate and iron-dependent oxygenase domain-containing protein 3 (319 aa).

The segment at 1-34 is disordered; sequence MAPQRRAATKAPEGNGAAERRNRSSTKKDRAPRE. Topologically, residues 1-42 are cytoplasmic; it reads MAPQRRAATKAPEGNGAAERRNRSSTKKDRAPREVQRLWQRP. Over residues 18–34 the composition is skewed to basic and acidic residues; it reads AERRNRSSTKKDRAPRE. A helical; Signal-anchor for type II membrane protein transmembrane segment spans residues 43–65; it reads WLRTAGLGAGFVLTALLLWSSLG. Residues 66 to 319 are Lumenal-facing; the sequence is ADDGVAEVLA…DHGIEDPAFP (254 aa). Residues 207-309 form the Fe2OG dioxygenase domain; it reads KPTFFSRINS…AITIAFSCNP (103 aa). N215 carries N-linked (GlcNAc...) asparagine glycosylation. 3 residues coordinate Fe cation: H230, D232, and H288. The active site involves R298. Residue R298 participates in 2-oxoglutarate binding.

This sequence belongs to the OGFOD3 family. Fe(2+) serves as cofactor. L-ascorbate is required as a cofactor.

It is found in the membrane. This is 2-oxoglutarate and iron-dependent oxygenase domain-containing protein 3 (OGFOD3) from Homo sapiens (Human).